The following is a 368-amino-acid chain: MSSESDTDTEDEIARERLIELASDFYDQFAEGEVPTMEIPTRTKSNIVFDEDKDVWVYGDRTSTRSANSVRGAQKLLKAIYTIEFLADQLEQGRSSTLRELYYLSESWDEERAQFNDQDESNQLVEDLEIVSKVTREDFHMRPEESGATIMGPLYLREQTRRGEREIHCQKDVGEGGYQIPNNPDTIEFLDNDADFVLCVETGGMRDRLVENGFDEEHNVIIVHLKGQPARATRRITKRLHDDLDLPVVVFCDGDPWSYRIYASVAYGSIKSAHLSEYLATPEAEYIGIQPADIVEYDLPTDPLSDSDINALESELDDPRFQDDYWREQIELQLDIGKKAEQQALASRGLDFVTETYLPERLGEMGVL.

One can recognise a Topo IIA-type catalytic domain in the interval 9-148 (TEDEIARERL…FHMRPEESGA (140 aa)). The active-site O-(5'-phospho-DNA)-tyrosine intermediate is tyrosine 103. Positions 201 and 253 each coordinate Mg(2+).

This sequence belongs to the TOP6A family. Homodimer. Heterotetramer of two Top6A and two Top6B chains. Requires Mg(2+) as cofactor.

The enzyme catalyses ATP-dependent breakage, passage and rejoining of double-stranded DNA.. Functionally, relaxes both positive and negative superturns and exhibits a strong decatenase activity. This is Type 2 DNA topoisomerase 6 subunit A from Natronomonas pharaonis (strain ATCC 35678 / DSM 2160 / CIP 103997 / JCM 8858 / NBRC 14720 / NCIMB 2260 / Gabara) (Halobacterium pharaonis).